We begin with the raw amino-acid sequence, 64 residues long: Large ribosomal subunit protein bL35 (64 aa).

Basic residues predominate over residues Met-1–Arg-42. The tract at residues Met-1–Gly-64 is disordered. Positions Thr-48–Ile-58 are enriched in polar residues.

The protein belongs to the bacterial ribosomal protein bL35 family.

The protein is Large ribosomal subunit protein bL35 of Mycolicibacterium smegmatis (strain ATCC 700084 / mc(2)155) (Mycobacterium smegmatis).